A 214-amino-acid polypeptide reads, in one-letter code: Probable transaldolase (214 aa).

The Schiff-base intermediate with substrate role is filled by Lys83.

It belongs to the transaldolase family. Type 3B subfamily.

It localises to the cytoplasm. The enzyme catalyses D-sedoheptulose 7-phosphate + D-glyceraldehyde 3-phosphate = D-erythrose 4-phosphate + beta-D-fructose 6-phosphate. It participates in carbohydrate degradation; pentose phosphate pathway; D-glyceraldehyde 3-phosphate and beta-D-fructose 6-phosphate from D-ribose 5-phosphate and D-xylulose 5-phosphate (non-oxidative stage): step 2/3. In terms of biological role, transaldolase is important for the balance of metabolites in the pentose-phosphate pathway. The sequence is that of Probable transaldolase from Clostridium tetani (strain Massachusetts / E88).